Reading from the N-terminus, the 334-residue chain is MNHSEQASAYKAVKNIVLVGRTGNGKSATGNSLIGKDVFVSEAKATGVTKTCQTYKAVTPGGSRINVIDTPGLFDLSVSAEFISKEIINCLRLAEGGLHVVVLVLSVRTRITQEEENTLSTLQVLFGNEILDYLIVLFTGGDELEANNQTLDDYFHQGCPYFLKTVLGLCDDRKVMFNNMTKDKHKKVEQVQQFLALVAKVEERNEGKPFRGKMYLEIKEETEWLKKQKKAVEASNLGEAELAKMKKELQMEHDTRMSQMEDMVKNMLKETSAAHERMVSMLNENLENAHRENIDLRKAHDHEQKKRMMIQLGLGVPGALGMIAPAALAMCSIL.

Positions 11–219 (KAVKNIVLVG…FRGKMYLEIK (209 aa)) constitute an AIG1-type G domain. The segment at 20–27 (GRTGNGKS) is G1. Residues 20–28 (GRTGNGKSA) and serine 41 contribute to the GTP site. A G2 region spans residues 47–51 (GVTKT). The segment at 69–72 (DTPG) is G3. The G4 stretch occupies residues 139 to 142 (TGGD). Residues 178–180 (NNM) form a G5 region. Asparagine 179 lines the GTP pocket. A coiled-coil region spans residues 272 to 306 (SAAHERMVSMLNENLENAHRENIDLRKAHDHEQKK).

The protein belongs to the TRAFAC class TrmE-Era-EngA-EngB-Septin-like GTPase superfamily. AIG1/Toc34/Toc159-like paraseptin GTPase family. IAN subfamily. As to expression, mostly expressed in pollen. Also detected in lateral roots and radicles.

This chain is Immune-associated nucleotide-binding protein 3, found in Arabidopsis thaliana (Mouse-ear cress).